The chain runs to 147 residues: Hemoglobin subunit beta (147 aa).

Position 2 is an N-acetylvaline (valine 2). Positions 3 to 147 (HLTGEEKAAV…VANALAHKYH (145 aa)) constitute a Globin domain. The residue at position 13 (threonine 13) is a Phosphothreonine. Serine 45 carries the post-translational modification Phosphoserine. Position 60 is an N6-acetyllysine (lysine 60). Histidine 64 is a heme b binding site. Lysine 83 is subject to N6-acetyllysine. A heme b-binding site is contributed by histidine 93. At cysteine 94 the chain carries S-nitrosocysteine. N6-acetyllysine is present on lysine 145.

Belongs to the globin family. In terms of assembly, heterotetramer of two alpha chains and two beta chains. Red blood cells.

Its function is as follows. Involved in oxygen transport from the lung to the various peripheral tissues. The polypeptide is Hemoglobin subunit beta (HBB) (Aotus azarae (Azara's night monkey)).